A 100-amino-acid polypeptide reads, in one-letter code: Small ribosomal subunit protein uS14c (100 aa).

Belongs to the universal ribosomal protein uS14 family. As to quaternary structure, part of the 30S ribosomal subunit.

It localises to the plastid. Its subcellular location is the chloroplast. Binds 16S rRNA, required for the assembly of 30S particles. The protein is Small ribosomal subunit protein uS14c of Chaetosphaeridium globosum (Charophycean green alga).